A 339-amino-acid polypeptide reads, in one-letter code: AT-hook motif nuclear-localized protein 26 (339 aa).

The segment covering 1 to 12 (MDPVQSHGSQSS) has biased composition (polar residues). 2 disordered regions span residues 1 to 132 (MDPV…NKPK) and 273 to 339 (MQTP…RPPY). Residues 24–45 (LHLQQQQQHQQQHQQQQQQQFF) show a composition bias toward low complexity. The span at 82–93 (NMDNIANTNSGS) shows a compositional bias: polar residues. Residues 102–113 (GGEGGSGGGGSG) are compositionally biased toward gly residues. Residues 118–130 (RRPRGRPAGSKNK) constitute a DNA-binding region (a.T hook). The PPC domain occupies 142-279 (ANALRTHVME…EDEMQTPVQG (138 aa)). The segment covering 278–291 (QGGGGGGGGGGGMG) has biased composition (gly residues). Low complexity predominate over residues 292–310 (SPPMMGQQQAMAAMAAAQG).

It localises to the nucleus. In terms of biological role, transcription factor that specifically binds AT-rich DNA sequences related to the nuclear matrix attachment regions (MARs). The chain is AT-hook motif nuclear-localized protein 26 from Arabidopsis thaliana (Mouse-ear cress).